A 419-amino-acid polypeptide reads, in one-letter code: Adenylosuccinate synthetase (419 aa).

Residues 15–21 (GDEGKGK) and 43–45 (GHT) each bind GTP. The active-site Proton acceptor is Asp-16. Mg(2+) is bound by residues Asp-16 and Gly-43. Residues 16-19 (DEGK), 41-44 (NAGH), Thr-128, Arg-142, Gln-223, Thr-238, and Arg-302 contribute to the IMP site. His-44 serves as the catalytic Proton donor. 298-304 (TTTGRAR) contributes to the substrate binding site. GTP contacts are provided by residues Arg-304, 330–332 (KLD), and 408–410 (STS).

This sequence belongs to the adenylosuccinate synthetase family. Homodimer. The cofactor is Mg(2+).

Its subcellular location is the cytoplasm. The catalysed reaction is IMP + L-aspartate + GTP = N(6)-(1,2-dicarboxyethyl)-AMP + GDP + phosphate + 2 H(+). The protein operates within purine metabolism; AMP biosynthesis via de novo pathway; AMP from IMP: step 1/2. Its function is as follows. Plays an important role in the de novo pathway of purine nucleotide biosynthesis. Catalyzes the first committed step in the biosynthesis of AMP from IMP. In Sulfurimonas denitrificans (strain ATCC 33889 / DSM 1251) (Thiomicrospira denitrificans (strain ATCC 33889 / DSM 1251)), this protein is Adenylosuccinate synthetase.